The chain runs to 538 residues: Putative outer membrane porin BglH (538 aa).

The signal sequence occupies residues Met-1–Ala-25.

The protein belongs to the porin LamB (TC 1.B.3) family.

It is found in the cell outer membrane. Functionally, may be a sugar porin with a broad carbohydrate specificity. In Escherichia coli (strain UTI89 / UPEC), this protein is Putative outer membrane porin BglH (bglH).